The following is a 329-amino-acid chain: Putative oligopeptide transport ATP-binding protein YkfD (329 aa).

Residues 7 to 252 (LEVSQLKMHF…PLHPYTKALL (246 aa)) form the ABC transporter domain. ATP is bound at residue 44–51 (GESGCGKS).

It belongs to the ABC transporter superfamily.

This Bacillus subtilis (strain 168) protein is Putative oligopeptide transport ATP-binding protein YkfD (ykfD).